Consider the following 317-residue polypeptide: MAPAMGNELQHRTVLLEEAVQALVTRADGVYVDGTFGRGGHSRLVLEKLAESGRLIAFDKDPLAIATAQQIADPRFGIVHESFASLRTAIAERGVGRVSGVLLDLGISSPQIDDPERGFSFRADGPLDMRMDPTRGESAADWLARATVQELTEVIRDYGEERFAFQIAKALVARRAESDRLGPLVSTGELAQIVANVVKTREKGKDPATRTFQAIRIHINQELAELQVVLEAALSLLEQGGRLVVISFHSLEDRIVKRFMQAHASTPAVDRRLPIRAVDLPSPPLKIIGRVFASDAEVAANPRARSAVMRVAERIAP.

Residues Gly-39–His-41, Asp-59, Phe-83, Asp-104, and Gln-111 contribute to the S-adenosyl-L-methionine site.

This sequence belongs to the methyltransferase superfamily. RsmH family.

Its subcellular location is the cytoplasm. The catalysed reaction is cytidine(1402) in 16S rRNA + S-adenosyl-L-methionine = N(4)-methylcytidine(1402) in 16S rRNA + S-adenosyl-L-homocysteine + H(+). Its function is as follows. Specifically methylates the N4 position of cytidine in position 1402 (C1402) of 16S rRNA. The polypeptide is Ribosomal RNA small subunit methyltransferase H (Paraburkholderia phytofirmans (strain DSM 17436 / LMG 22146 / PsJN) (Burkholderia phytofirmans)).